The sequence spans 369 residues: UDP-N-acetylglucosamine--N-acetylmuramyl-(pentapeptide) pyrophosphoryl-undecaprenol N-acetylglucosamine transferase (369 aa).

UDP-N-acetyl-alpha-D-glucosamine is bound by residues 10 to 12, Asn124, Arg161, Ser195, and Gln295; that span reads TAG.

The protein belongs to the glycosyltransferase 28 family. MurG subfamily.

It localises to the cell membrane. The enzyme catalyses di-trans,octa-cis-undecaprenyl diphospho-N-acetyl-alpha-D-muramoyl-L-alanyl-D-glutamyl-meso-2,6-diaminopimeloyl-D-alanyl-D-alanine + UDP-N-acetyl-alpha-D-glucosamine = di-trans,octa-cis-undecaprenyl diphospho-[N-acetyl-alpha-D-glucosaminyl-(1-&gt;4)]-N-acetyl-alpha-D-muramoyl-L-alanyl-D-glutamyl-meso-2,6-diaminopimeloyl-D-alanyl-D-alanine + UDP + H(+). Its pathway is cell wall biogenesis; peptidoglycan biosynthesis. Its function is as follows. Cell wall formation. Catalyzes the transfer of a GlcNAc subunit on undecaprenyl-pyrophosphoryl-MurNAc-pentapeptide (lipid intermediate I) to form undecaprenyl-pyrophosphoryl-MurNAc-(pentapeptide)GlcNAc (lipid intermediate II). The protein is UDP-N-acetylglucosamine--N-acetylmuramyl-(pentapeptide) pyrophosphoryl-undecaprenol N-acetylglucosamine transferase of Acidothermus cellulolyticus (strain ATCC 43068 / DSM 8971 / 11B).